The primary structure comprises 84 residues: Large ribosomal subunit protein bL27 (84 aa).

Residues 1–20 are disordered; that stretch reads MAHKKAGGSTRNGRDSNPKY.

The protein belongs to the bacterial ribosomal protein bL27 family.

In Francisella tularensis subsp. tularensis (strain FSC 198), this protein is Large ribosomal subunit protein bL27.